A 284-amino-acid chain; its full sequence is ATP synthase subunit a (284 aa).

5 consecutive transmembrane segments (helical) span residues A47–F67, V108–V128, V156–I176, M233–W253, and A254–V274.

It belongs to the ATPase A chain family. In terms of assembly, F-type ATPases have 2 components, CF(1) - the catalytic core - and CF(0) - the membrane proton channel. CF(1) has five subunits: alpha(3), beta(3), gamma(1), delta(1), epsilon(1). CF(0) has three main subunits: a(1), b(2) and c(9-12). The alpha and beta chains form an alternating ring which encloses part of the gamma chain. CF(1) is attached to CF(0) by a central stalk formed by the gamma and epsilon chains, while a peripheral stalk is formed by the delta and b chains.

The protein localises to the cell inner membrane. In terms of biological role, key component of the proton channel; it plays a direct role in the translocation of protons across the membrane. The chain is ATP synthase subunit a from Ruthia magnifica subsp. Calyptogena magnifica.